Here is a 767-residue protein sequence, read N- to C-terminus: Probable NADP-dependent malic enzyme (767 aa).

The malic enzyme stretch occupies residues 1–430; the sequence is MDEMNKINYT…QLGSRLNPTA (430 aa). Tyr42 (proton donor) is an active-site residue. Catalysis depends on Lys97, which acts as the Proton acceptor. Residues Glu139, Asp140, and Asp165 each coordinate a divalent metal cation. NADP(+) contacts are provided by residues 198-201, Asn290, and Asn322; that span reads AGAA. A phosphate acetyltransferase region spans residues 431 to 767; sequence NYMNFLAEKI…FACVEAIKEV (337 aa).

It in the N-terminal section; belongs to the malic enzymes family. In the C-terminal section; belongs to the phosphate acetyltransferase and butyryltransferase family. The cofactor is Mg(2+). It depends on Mn(2+) as a cofactor.

It catalyses the reaction (S)-malate + NADP(+) = pyruvate + CO2 + NADPH. It carries out the reaction oxaloacetate + H(+) = pyruvate + CO2. This is Probable NADP-dependent malic enzyme from Rickettsia prowazekii (strain Madrid E).